The following is a 20-amino-acid chain: MKCNKMNRVQLKEGSVSMTL.

The tract at residues 1 to 20 (MKCNKMNRVQLKEGSVSMTL) is disordered.

This chain is Tetracycline resistance leader peptide (tetL), found in Bacillus subtilis (strain 168).